A 159-amino-acid polypeptide reads, in one-letter code: NADH-quinone oxidoreductase subunit I (159 aa).

4Fe-4S ferredoxin-type domains are found at residues 51–80 (RRYENGEERCIACKLCEAICPAQAIVIEAD) and 90–119 (TRYDIDMTKCIYCGLCQEACPVDAIVEGPN). [4Fe-4S] cluster is bound by residues Cys-60, Cys-63, Cys-66, Cys-70, Cys-99, Cys-102, Cys-105, and Cys-109.

This sequence belongs to the complex I 23 kDa subunit family. As to quaternary structure, NDH-1 is composed of 14 different subunits. Subunits NuoA, H, J, K, L, M, N constitute the membrane sector of the complex. It depends on [4Fe-4S] cluster as a cofactor.

It is found in the cell inner membrane. It catalyses the reaction a quinone + NADH + 5 H(+)(in) = a quinol + NAD(+) + 4 H(+)(out). NDH-1 shuttles electrons from NADH, via FMN and iron-sulfur (Fe-S) centers, to quinones in the respiratory chain. The immediate electron acceptor for the enzyme in this species is believed to be ubiquinone. Couples the redox reaction to proton translocation (for every two electrons transferred, four hydrogen ions are translocated across the cytoplasmic membrane), and thus conserves the redox energy in a proton gradient. In Rickettsia peacockii (strain Rustic), this protein is NADH-quinone oxidoreductase subunit I.